We begin with the raw amino-acid sequence, 323 residues long: Ribose-phosphate pyrophosphokinase (323 aa).

ATP contacts are provided by residues 38-40 and 96-97; these read DGE and RQ. 2 residues coordinate Mg(2+): His130 and Asp170. Lys193 is a catalytic residue. Residues Arg195, Asp219, and 223–227 contribute to the D-ribose 5-phosphate site; that span reads DTAGT.

Belongs to the ribose-phosphate pyrophosphokinase family. Class I subfamily. In terms of assembly, homohexamer. Mg(2+) is required as a cofactor.

The protein localises to the cytoplasm. The catalysed reaction is D-ribose 5-phosphate + ATP = 5-phospho-alpha-D-ribose 1-diphosphate + AMP + H(+). The protein operates within metabolic intermediate biosynthesis; 5-phospho-alpha-D-ribose 1-diphosphate biosynthesis; 5-phospho-alpha-D-ribose 1-diphosphate from D-ribose 5-phosphate (route I): step 1/1. Functionally, involved in the biosynthesis of the central metabolite phospho-alpha-D-ribosyl-1-pyrophosphate (PRPP) via the transfer of pyrophosphoryl group from ATP to 1-hydroxyl of ribose-5-phosphate (Rib-5-P). This chain is Ribose-phosphate pyrophosphokinase, found in Chlorobaculum tepidum (strain ATCC 49652 / DSM 12025 / NBRC 103806 / TLS) (Chlorobium tepidum).